The primary structure comprises 716 residues: Leucine-rich repeat neuronal protein 1 (716 aa).

A signal peptide spans 1 to 25 (MARLSTGKAACQVVLGLLITSLTES). Residues 26–72 (SILTSECPQLCVCEIRPWFTPQSTYREATTVDCNDLRLTRIPGNLSS) form the LRRNT domain. The Extracellular segment spans residues 26 to 631 (SILTSECPQL…DISDHETSTA (606 aa)). N-linked (GlcNAc...) asparagine glycosylation is present at N69. LRR repeat units lie at residues 73 to 95 (DTQV…QQLF), 96 to 117 (NLTE…GLAN), 120 to 141 (QLTT…CLQD), 144 to 165 (NLQE…AFSG), 168 to 189 (NLLR…WFDS), 192 to 213 (NLEI…NFRP), 216 to 237 (NLRS…ALVG), 240 to 261 (SLES…ALQK), and 264 to 285 (NLKF…DFKN). N96 and N117 each carry an N-linked (GlcNAc...) asparagine glycan. The 54-residue stretch at 371 to 424 (NPLRCDCVIHWINSNKTNIRFMEPLSMFCAMPPEYRGQQVKEVLIQDSSEQCLP) folds into the LRRCT domain. Residue N385 is glycosylated (N-linked (GlcNAc...) asparagine). One can recognise an Ig-like C2-type domain in the interval 424–515 (PMISHDTFPN…GADTRVATIK (92 aa)). The cysteines at positions 447 and 499 are disulfide-linked. N-linked (GlcNAc...) asparagine glycosylation is present at N517. The region spanning 525 to 619 (QVLKIYVKQT…VNVTTKTAAF (95 aa)) is the Fibronectin type-III domain. Residues 632–652 (LAAVMGSMFAVISLASIAIYI) form a helical membrane-spanning segment. Over 653-716 (AKRFKRKNYH…VDTSRSYYMW (64 aa)) the chain is Cytoplasmic. Positions 692 to 716 (SDKDKDGSADTKPTQVDTSRSYYMW) are disordered. Positions 702–716 (TKPTQVDTSRSYYMW) are enriched in polar residues.

In terms of tissue distribution, expressed in brain.

It localises to the membrane. In Mus musculus (Mouse), this protein is Leucine-rich repeat neuronal protein 1 (Lrrn1).